We begin with the raw amino-acid sequence, 421 residues long: Histidine--tRNA ligase (421 aa).

The protein belongs to the class-II aminoacyl-tRNA synthetase family. Homodimer.

It is found in the cytoplasm. The enzyme catalyses tRNA(His) + L-histidine + ATP = L-histidyl-tRNA(His) + AMP + diphosphate + H(+). This is Histidine--tRNA ligase from Alkaliphilus oremlandii (strain OhILAs) (Clostridium oremlandii (strain OhILAs)).